The chain runs to 423 residues: Putative RING-H2 finger protein ATL49 (423 aa).

Residues 43–63 (ILLIIIILSIIFFISGLLHIL) traverse the membrane as a helical segment. An RING-type; atypical zinc finger spans residues 126-168 (CPVCLCEFETEDKLRLLPKCSHAFHVECIDTWLLSHSTCPLCR). Disordered stretches follow at residues 213–236 (NNDS…DMDG) and 377–399 (HRIP…KTPS). The segment covering 379–389 (IPPEESLKSEN) has biased composition (basic and acidic residues).

This sequence belongs to the RING-type zinc finger family. ATL subfamily.

Its subcellular location is the membrane. It carries out the reaction S-ubiquitinyl-[E2 ubiquitin-conjugating enzyme]-L-cysteine + [acceptor protein]-L-lysine = [E2 ubiquitin-conjugating enzyme]-L-cysteine + N(6)-ubiquitinyl-[acceptor protein]-L-lysine.. The protein operates within protein modification; protein ubiquitination. May be involved in female gametophyte development. This Arabidopsis thaliana (Mouse-ear cress) protein is Putative RING-H2 finger protein ATL49 (ATL49).